The sequence spans 359 residues: Methylthioribose-1-phosphate isomerase (359 aa).

Aspartate 235 serves as the catalytic Proton donor.

The protein belongs to the eIF-2B alpha/beta/delta subunits family. MtnA subfamily.

The protein localises to the cytoplasm. The protein resides in the nucleus. It catalyses the reaction 5-(methylsulfanyl)-alpha-D-ribose 1-phosphate = 5-(methylsulfanyl)-D-ribulose 1-phosphate. Its pathway is amino-acid biosynthesis; L-methionine biosynthesis via salvage pathway; L-methionine from S-methyl-5-thio-alpha-D-ribose 1-phosphate: step 1/6. In terms of biological role, catalyzes the interconversion of methylthioribose-1-phosphate (MTR-1-P) into methylthioribulose-1-phosphate (MTRu-1-P). The protein is Methylthioribose-1-phosphate isomerase (mri1) of Schizosaccharomyces pombe (strain 972 / ATCC 24843) (Fission yeast).